The primary structure comprises 362 residues: O-methyltransferase 13 (362 aa).

Positions 181, 205, 228, 248, and 262 each coordinate S-adenosyl-L-homocysteine. An S-adenosyl-L-methionine-binding site is contributed by aspartate 228. Histidine 266 serves as the catalytic Proton acceptor.

The protein belongs to the class I-like SAM-binding methyltransferase superfamily. Cation-independent O-methyltransferase family. As to quaternary structure, homodimer. In terms of tissue distribution, mainly expressed in vascular and cortical tissues.

The catalysed reaction is dopamine + S-adenosyl-L-methionine = 3-methoxytyramine + S-adenosyl-L-homocysteine + H(+). It participates in aromatic compound metabolism. It functions in the pathway alkaloid biosynthesis. O-methyltransferase participating in the biosynthesis of natural products derived from phenylethylamine, including mescaline, a natural hallucinogen potentially used in psychotherapeutic treatments. Catalyzes the O-methylation of dopamine and 4,5-dihydroxy-3-methoxyphenethylamine. The polypeptide is O-methyltransferase 13 (Lophophora williamsii (Peyote)).